The chain runs to 90 residues: Large ribosomal subunit protein bL27 (90 aa).

The disordered stretch occupies residues Met-1 to Leu-21.

Belongs to the bacterial ribosomal protein bL27 family.

The polypeptide is Large ribosomal subunit protein bL27 (Neisseria meningitidis serogroup C (strain 053442)).